The primary structure comprises 77 residues: Apelin (77 aa).

An N-terminal signal peptide occupies residues 1–22 (MNLRLCVQALLLLWLSLTAVCG). A propeptide spanning residues 23-41 (GSLMPLPDGNGLEDGNVRH) is cleaved from the precursor. Residues 43 to 77 (VQPRGSRNGPGPWQGGRRKFRRQRPRLSHKGPMPF) are disordered. Positions 58–71 (GRRKFRRQRPRLSH) are enriched in basic residues.

It belongs to the apelin family. Several active peptides may be produced by proteolytic processing of the peptide precursor. As to expression, expressed in the brain with highest levels in the frontal cortex, thalamus, hypothalamus and midbrain. Secreted by the mammary gland into the colostrum and the milk.

It is found in the secreted. The protein resides in the extracellular space. Functionally, peptide hormone that functions as endogenous ligand for the G-protein-coupled apelin receptor (APLNR/APJ), that plays a role in cadiovascular homeostasis. Functions as a balanced agonist activating both G(i) protein pathway and beta-arrestin pathway of APLNR. Downstream G proteins activation, apelin can inhibit cAMP production and activate key intracellular effectors such as ERKs. On the other hand, APLNR activation induces beta-arrestin recruitment to the membrane leading to desensitization and internalization of the receptor. Apelin blunts cardiac hypertrophic induction from APLNR on response to pathological stimuli, but also induces myocardial hypertrophy under normal conditions. Apelin-36 dissociates more hardly than (pyroglu)apelin-13 from APLNR. Involved in the regulation of cardiac precursor cell movements during gastrulation and heart morphogenesis. Has an inhibitory effect on cytokine production in response to T-cell receptor/CD3 cross-linking; the oral intake of apelin in the colostrum and the milk might therefore modulate immune responses in neonates. Plays a role in early coronary blood vessels formation. Mediates myocardial contractility in an ERK1/2-dependent manner. May also have a role in the central control of body fluid homeostasis by influencing vasopressin release and drinking behavior. In terms of biological role, (Microbial infection) Endogenous ligand for the apelin receptor (APLNR), an alternative coreceptor with CD4 for HIV-1 infection. Inhibits HIV-1 entry in cells coexpressing CD4 and APLNR. Apelin-36 has a greater inhibitory activity on HIV infection than other synthetic apelin derivatives. The sequence is that of Apelin from Homo sapiens (Human).